A 332-amino-acid polypeptide reads, in one-letter code: Hygromycin-B 7''-O-kinase (332 aa).

Aspartate 223 functions as the Proton acceptor in the catalytic mechanism.

This sequence belongs to the aminoglycoside phosphotransferase family.

The enzyme catalyses hygromycin B + ATP = 7''-O-phosphohygromycin B + ADP + H(+). Its function is as follows. The aminoglycoside phosphotransferases achieve inactivation of their antibiotic substrates by phosphorylation. This chain is Hygromycin-B 7''-O-kinase (hyg), found in Streptomyces hygroscopicus.